We begin with the raw amino-acid sequence, 333 residues long: Fatty acid hydroxylase domain-containing protein 2 (333 aa).

Helical transmembrane passes span 29 to 49 (FILGSGLLSFVAFWNSVTWHL), 77 to 97 (ILFFIGAIQVPCLFFWSFNGL), 134 to 154 (TVLFNQCMVSFPMVVFLYPFL), 168 to 188 (FHWFLLELAIFTLIEEVLFYY), 215 to 235 (VISLYAHPIEHVVSNMLPAIV), and 237 to 257 (PLVMGSHLSSITMWFSLALII). The 124-residue stretch at 176–299 (AIFTLIEEVL…LGVLDHLHGT (124 aa)) folds into the Fatty acid hydroxylase domain.

The protein belongs to the sterol desaturase family.

The protein localises to the cytoplasm. Its subcellular location is the membrane. Its function is as follows. Promotes megakaryocyte differentiation by enhancing ERK phosphorylation and up-regulating RUNX1 expression. The chain is Fatty acid hydroxylase domain-containing protein 2 (FAXDC2) from Macaca fascicularis (Crab-eating macaque).